The sequence spans 1537 residues: Isocyanide synthase-NRPS hybrid crmA (1537 aa).

The segment at 1-502 is isocyanide synthase domain; sequence MFHKEAGISH…CVKAGYAALF (502 aa). Positions 351 to 391 are disordered; that stretch reads PSVPVSPGMSSPSAASTSSSGASMQGSAATTPETHSPPTFT. A compositionally biased stretch (low complexity) spans 352–381; sequence SVPVSPGMSSPSAASTSSSGASMQGSAATT. A compositionally biased stretch (polar residues) spans 382–391; the sequence is PETHSPPTFT. Residues 573–752 are adenylation; the sequence is EAINDPFCFL…GNLIPPREDW (180 aa). Residues 941-1019 form the Carrier domain; that stretch reads SSAHSIEDNV…RLSAIIALLA (79 aa). The residue at position 977 (S977) is an O-(pantetheine 4'-phosphoryl)serine. Residues 1293-1526 are transferase; that stretch reads RCLKTTMFLV…LEMLVTDEEF (234 aa).

This sequence in the N-terminal section; belongs to the isocyanide synthase family. It in the C-terminal section; belongs to the NRP synthetase family.

It participates in secondary metabolite biosynthesis. Isocyanide synthase-NRPS hybrid; part of the crm gene cluster that mediates the biosynthesis of a yet unidentified copper-responsive metabolite. Converts valine into valine isocyanide that then contributes to two distinct biosynthetic pathways under copper-limiting conditions. Reaction of valine isocyanide with the imine intermediate of festuclavine results in formation of the amide bond in fumivaline A. In addition, valine isocyanide contributes to biosynthesis of a family of acylated sugar alcohols, the D-mannitol-derived fumicicolins. CrmA and associated products inhibit microbial growth from copper-starved A.fumigatus. The chain is Isocyanide synthase-NRPS hybrid crmA from Aspergillus fumigatus (strain ATCC MYA-4609 / CBS 101355 / FGSC A1100 / Af293) (Neosartorya fumigata).